Consider the following 178-residue polypeptide: Large ribosomal subunit protein uL10 (178 aa).

The protein belongs to the universal ribosomal protein uL10 family. Part of the ribosomal stalk of the 50S ribosomal subunit. The N-terminus interacts with L11 and the large rRNA to form the base of the stalk. The C-terminus forms an elongated spine to which L12 dimers bind in a sequential fashion forming a multimeric L10(L12)X complex.

Functionally, forms part of the ribosomal stalk, playing a central role in the interaction of the ribosome with GTP-bound translation factors. The protein is Large ribosomal subunit protein uL10 of Petrotoga mobilis (strain DSM 10674 / SJ95).